Reading from the N-terminus, the 235-residue chain is Derlin-3 (235 aa).

Residues 1–22 (MAWQGLAAEFLQVPAVTRAYTA) are Cytoplasmic-facing. Residues 23–43 (ACVLTTAAVQLELLSPFQLYF) form a helical membrane-spanning segment. The Lumenal segment spans residues 44-58 (NPHLVFRKFQVWRLV). Residues 59–79 (TNFLFFGPLGFSFFFNMLFVF) traverse the membrane as a helical segment. Over 80-98 (RYCRMLEEGSFRGRTADFV) the chain is Cytoplasmic. A helical membrane pass occupies residues 99–119 (FMFLFGGVLMTLLGLLGSLFF). Residues 120–157 (LGQALMAMLVYVWSRRSPRVRVNFFGLLTFQAPFLPWA) lie on the Lumenal side of the membrane. A helical transmembrane segment spans residues 158 to 178 (LMGFSLLLGNSILVDLLGIAV). The Cytoplasmic portion of the chain corresponds to 179-235 (GHIYYFLEDVFPNQPGGKRLLQTPGFLKLLLDAPAEDPNYLPLPEEQPGPHLPPPQQ). Positions 216–235 (PNYLPLPEEQPGPHLPPPQQ) are disordered. The span at 223–235 (EEQPGPHLPPPQQ) shows a compositional bias: pro residues.

Belongs to the derlin family. In terms of assembly, forms homo- and heterooligomers with DERL2 and, to a lesser extent, with DERL1. Interacts with VCP and EDEM1. Interacts with SELENOK and SELENOS. Interacts with the signal recognition particle/SRP and the SRP receptor; in the process of endoplasmic reticulum stress-induced pre-emptive quality control. In terms of tissue distribution, unlike DERL1 and DERL2, restricted to several tissues. Expressed at high levels in placenta, pancreas, spleen and small intestine.

The protein resides in the endoplasmic reticulum membrane. In terms of biological role, functional component of endoplasmic reticulum-associated degradation (ERAD) for misfolded lumenal glycoproteins, but not that of misfolded nonglycoproteins. May act by forming a channel that allows the retrotranslocation of misfolded glycoproteins into the cytosol where they are ubiquitinated and degraded by the proteasome. May mediate the interaction between VCP and the misfolded glycoproteins. May be involved in endoplasmic reticulum stress-induced pre-emptive quality control, a mechanism that selectively attenuates the translocation of newly synthesized proteins into the endoplasmic reticulum and reroutes them to the cytosol for proteasomal degradation. The protein is Derlin-3 of Homo sapiens (Human).